The chain runs to 396 residues: 1-deoxy-D-xylulose 5-phosphate reductoisomerase (396 aa).

Threonine 15, glycine 16, serine 17, isoleucine 18, glycine 41, and asparagine 129 together coordinate NADPH. Position 130 (lysine 130) interacts with 1-deoxy-D-xylulose 5-phosphate. Glutamate 131 contacts NADPH. Position 155 (aspartate 155) interacts with Mn(2+). 1-deoxy-D-xylulose 5-phosphate is bound by residues serine 156, glutamate 157, serine 182, and histidine 205. A Mn(2+)-binding site is contributed by glutamate 157. Glycine 211 provides a ligand contact to NADPH. 1-deoxy-D-xylulose 5-phosphate is bound by residues serine 218, asparagine 223, lysine 224, and glutamate 227. Glutamate 227 lines the Mn(2+) pocket.

This sequence belongs to the DXR family. Mg(2+) serves as cofactor. The cofactor is Mn(2+).

It carries out the reaction 2-C-methyl-D-erythritol 4-phosphate + NADP(+) = 1-deoxy-D-xylulose 5-phosphate + NADPH + H(+). It functions in the pathway isoprenoid biosynthesis; isopentenyl diphosphate biosynthesis via DXP pathway; isopentenyl diphosphate from 1-deoxy-D-xylulose 5-phosphate: step 1/6. In terms of biological role, catalyzes the NADPH-dependent rearrangement and reduction of 1-deoxy-D-xylulose-5-phosphate (DXP) to 2-C-methyl-D-erythritol 4-phosphate (MEP). In Xanthomonas oryzae pv. oryzae (strain PXO99A), this protein is 1-deoxy-D-xylulose 5-phosphate reductoisomerase.